The primary structure comprises 434 residues: ATP-dependent protease ATPase subunit HslU (434 aa).

ATP contacts are provided by residues Ile18, 60–65, Asp247, Glu312, and Arg384; that span reads GVGKTE.

Belongs to the ClpX chaperone family. HslU subfamily. In terms of assembly, a double ring-shaped homohexamer of HslV is capped on each side by a ring-shaped HslU homohexamer. The assembly of the HslU/HslV complex is dependent on binding of ATP.

It is found in the cytoplasm. Its function is as follows. ATPase subunit of a proteasome-like degradation complex; this subunit has chaperone activity. The binding of ATP and its subsequent hydrolysis by HslU are essential for unfolding of protein substrates subsequently hydrolyzed by HslV. HslU recognizes the N-terminal part of its protein substrates and unfolds these before they are guided to HslV for hydrolysis. The sequence is that of ATP-dependent protease ATPase subunit HslU from Brucella ovis (strain ATCC 25840 / 63/290 / NCTC 10512).